The sequence spans 86 residues: MGYGCRNKYTGVHLAGSCKQIKTYQVGIQRNIIWVITSFFLISSSFSRNGSLNSSAYFIFLFFNIVTKFIKIESCFLFYAVRKVAN.

It is found in the mitochondrion. This is an uncharacterized protein from Marchantia polymorpha (Common liverwort).